The following is a 119-amino-acid chain: FAD-linked sulfhydryl oxidase (119 aa).

In terms of domain architecture, ERV/ALR sulfhydryl oxidase spans 1–97 (MLHWGPKYWR…ISWSEYKNIY (97 aa)). Cysteine 44 and cysteine 47 are disulfide-bonded.

The protein belongs to the asfivirus B119L family. Interacts with A151R. The cofactor is FAD.

It localises to the host cytoplasm. The protein localises to the virion. The catalysed reaction is 2 R'C(R)SH + O2 = R'C(R)S-S(R)CR' + H2O2. Its function is as follows. FAD-dependent sulfhydryl oxidase that catalyzes the formation of disulfide bonds in viral proteins produced in the cell cytoplasm. Involved in virion maturation. This chain is FAD-linked sulfhydryl oxidase, found in African swine fever virus (isolate Warthog/Namibia/Wart80/1980) (ASFV).